A 186-amino-acid chain; its full sequence is MNVTSLSFPYGESIQWFCADRTDKLPPSPLKEWLLAPGSLTKKLKTCCNQFEVKVLGEGQLAPFKDEYPQQGSVWVREVLLCLDNVPWVFARTLIPLSLLSEREADFLGLGSRPLGELLFSQDNFIPGRIEVASFDTGSRLAHLAASLDQRVEHLLWGRRRYFHHGQDEMIVSEIFLPAAERAICQ.

R77, L115, and E174 together coordinate substrate.

This sequence belongs to the UbiC family.

It is found in the cytoplasm. The enzyme catalyses chorismate = 4-hydroxybenzoate + pyruvate. The protein operates within cofactor biosynthesis; ubiquinone biosynthesis. Its function is as follows. Removes the pyruvyl group from chorismate, with concomitant aromatization of the ring, to provide 4-hydroxybenzoate (4HB) for the ubiquinone pathway. This Shewanella sp. (strain W3-18-1) protein is Probable chorismate pyruvate-lyase.